Reading from the N-terminus, the 506-residue chain is Galactose/methyl galactoside import ATP-binding protein MglA (506 aa).

ABC transporter domains follow at residues 14 to 249 (LEMK…VGRS) and 264 to 506 (VMLE…SLYL). ATP is bound at residue 46–53 (GENGAGKS).

Belongs to the ABC transporter superfamily. Galactose/methyl galactoside importer (TC 3.A.1.2.3) family. As to quaternary structure, the complex is composed of one ATP-binding protein (MglA), two transmembrane proteins (MglC) and a solute-binding protein (MglB).

The protein resides in the cell inner membrane. The enzyme catalyses D-galactose(out) + ATP + H2O = D-galactose(in) + ADP + phosphate + H(+). It carries out the reaction methyl beta-D-galactoside(out) + ATP + H2O = methyl beta-D-galactoside(in) + ADP + phosphate + H(+). In terms of biological role, part of the ABC transporter complex MglABC involved in galactose/methyl galactoside import. Responsible for energy coupling to the transport system. This Sodalis glossinidius (strain morsitans) protein is Galactose/methyl galactoside import ATP-binding protein MglA.